Consider the following 328-residue polypeptide: Malate dehydrogenase (328 aa).

NAD(+) is bound at residue 12–18 (GAAGQIG). Substrate is bound by residues arginine 92 and arginine 98. NAD(+)-binding positions include asparagine 105, glutamine 112, and 129-131 (TGN). Asparagine 131 and arginine 162 together coordinate substrate. The active-site Proton acceptor is histidine 187.

This sequence belongs to the LDH/MDH superfamily. MDH type 2 family.

It carries out the reaction (S)-malate + NAD(+) = oxaloacetate + NADH + H(+). Functionally, catalyzes the reversible oxidation of malate to oxaloacetate. The polypeptide is Malate dehydrogenase (Nocardioides sp. (strain ATCC BAA-499 / JS614)).